The chain runs to 372 residues: Putative glutamate--cysteine ligase 2 (372 aa).

Belongs to the glutamate--cysteine ligase type 2 family. YbdK subfamily. Homodimer.

The enzyme catalyses L-cysteine + L-glutamate + ATP = gamma-L-glutamyl-L-cysteine + ADP + phosphate + H(+). ATP-dependent carboxylate-amine ligase which exhibits weak glutamate--cysteine ligase activity. In Escherichia coli O81 (strain ED1a), this protein is Putative glutamate--cysteine ligase 2 (ybdK).